Here is a 753-residue protein sequence, read N- to C-terminus: Probable phosphoenolpyruvate synthase (753 aa).

His398 acts as the Tele-phosphohistidine intermediate in catalysis. Substrate is bound by residues Arg488, Arg535, Glu631, Gly653, Thr654, Asn655, and Asp656. Glu631 lines the Mg(2+) pocket. Asp656 is a Mg(2+) binding site. Cys703 serves as the catalytic Proton donor.

Belongs to the PEP-utilizing enzyme family. Mg(2+) serves as cofactor.

It catalyses the reaction pyruvate + ATP + H2O = phosphoenolpyruvate + AMP + phosphate + 2 H(+). Its pathway is carbohydrate biosynthesis; gluconeogenesis. In terms of biological role, catalyzes the phosphorylation of pyruvate to phosphoenolpyruvate. This is Probable phosphoenolpyruvate synthase (ppsA) from Archaeoglobus fulgidus (strain ATCC 49558 / DSM 4304 / JCM 9628 / NBRC 100126 / VC-16).